Reading from the N-terminus, the 435-residue chain is Angio-associated migratory cell protein (435 aa).

Residues 1–65 form a disordered region; sequence MESESESGAA…EEEEEGNEEG (65 aa). Ser-20 carries the post-translational modification Phosphoserine. A compositionally biased stretch (acidic residues) spans 39 to 63; it reads DPDDLAQEMEDVDFEEEEEEEEGNE. WD repeat units lie at residues 90-130, 133-172, 174-213, 215-255, 259-300, 316-355, 357-396, and 399-434; these read LHSA…LLFE, GHKDSVTCAGFSHDSTLVATGDMSGLLKVWQVDTKEEVWS, EAGDLEWMEWHPRAPVLLAGTADGNTWMWKVPNGDCKTFQ, PNCP…HVLK, GHQG…GVFR, SESNSVESLGFCSVMPLAAVGYLDGTLAIYDLSTQTLRHQ, QHQSGIVQLLWEAGTAVVYTCSLDGIVRLWDARTGRLLTD, and GHTAEILDFALSKDASLVVTTSGDHKAKVFCVQRPD.

It is found in the cell membrane. Its subcellular location is the cytoplasm. In terms of biological role, plays a role in angiogenesis and cell migration. In smooth muscle cell migration, may act through the RhoA pathway. This is Angio-associated migratory cell protein (AAMP) from Canis lupus familiaris (Dog).